The following is a 428-amino-acid chain: Glutamate-1-semialdehyde 2,1-aminomutase (428 aa).

K265 is modified (N6-(pyridoxal phosphate)lysine).

It belongs to the class-III pyridoxal-phosphate-dependent aminotransferase family. HemL subfamily. In terms of assembly, homodimer. It depends on pyridoxal 5'-phosphate as a cofactor.

It localises to the cytoplasm. It carries out the reaction (S)-4-amino-5-oxopentanoate = 5-aminolevulinate. It functions in the pathway porphyrin-containing compound metabolism; protoporphyrin-IX biosynthesis; 5-aminolevulinate from L-glutamyl-tRNA(Glu): step 2/2. The polypeptide is Glutamate-1-semialdehyde 2,1-aminomutase (Shewanella woodyi (strain ATCC 51908 / MS32)).